The chain runs to 310 residues: GTP-binding protein GTR1 (310 aa).

Positions 15, 18, 19, 20, 21, 35, 41, 64, 126, 129, and 166 each coordinate GTP.

It belongs to the GTR/RAG GTP-binding protein family. Heterodimer; with GTR2. Component of the GSE complex composed of GTR1, GTR2, SLM4, MEH1 and LTV1. Interacts with GTR2; the interaction is direct. Interacts with TOR1.

Its subcellular location is the vacuole membrane. It carries out the reaction GTP + H2O = GDP + phosphate + H(+). Its function is as follows. GTPase involved in activation of the TORC1 signaling pathway, which promotes growth and represses autophagy in nutrient-rich conditions. Also required for TORC1 inactivation during nitrogen starvation. Required for intracellular sorting of GAP1 out of the endosome. Functionally associated with the inorganic phosphate transporter PHO84, and may be involved in regulating its function or localization. The protein is GTP-binding protein GTR1 (GTR1) of Saccharomyces cerevisiae (strain ATCC 204508 / S288c) (Baker's yeast).